Consider the following 499-residue polypeptide: Cryptochrome-1 (499 aa).

FAD is bound by residues R190, S218, S220, Q261, H328, D360–D362, C366, and N369.

It belongs to the DNA photolyase class-1 family. As to quaternary structure, interacts with tim and per; promoted by light conditions. Requires FAD as cofactor.

It is found in the cytoplasm. The protein localises to the perinuclear region. It localises to the nucleus. In terms of biological role, blue light-dependent regulator that is the input of the circadian feedback loop. Has no photolyase activity for cyclobutane pyrimidine dimers or 6-4 photoproducts. Regulation of expression by light suggests a role in photoreception for locomotor activity rhythms. Functions, together with per, as a transcriptional repressor required for the oscillation of peripheral circadian clocks and for the correct specification of clock cells. Genes directly activated by the transcription factors Clock (Clk) and cycle (cyc) are repressed by cry. The sequence is that of Cryptochrome-1 from Culex quinquefasciatus (Southern house mosquito).